Here is a 148-residue protein sequence, read N- to C-terminus: Probable 4-amino-4-deoxy-L-arabinose-phosphoundecaprenol flippase subunit ArnF (148 aa).

The Cytoplasmic segment spans residues 1–23; sequence MRGDNTGVGKEPAVTERPAIKGY. A helical transmembrane segment spans residues 24–44; that stretch reads LYVLGSILLVTLAQLAMKWGV. The Periplasmic portion of the chain corresponds to 45–63; the sequence is MQLPAWQASLDIMLAHPVP. A helical membrane pass occupies residues 64 to 84; that stretch reads LLVITAGVGCYALSLLCWLAA. The Cytoplasmic portion of the chain corresponds to 85-91; the sequence is LHFTPLN. A helical transmembrane segment spans residues 92–112; that stretch reads IAYPLLSTSYALVYLLAVSIP. Residues 113 to 117 lie on the Periplasmic side of the membrane; that stretch reads SFAEP. A helical membrane pass occupies residues 118–138; that stretch reads LEPGKAVGVIFILLGAVLVGI. The Cytoplasmic segment spans residues 139-148; sequence KPVGRKRNAH.

It belongs to the ArnF family. In terms of assembly, heterodimer of ArnE and ArnF.

It localises to the cell inner membrane. Its pathway is bacterial outer membrane biogenesis; lipopolysaccharide biosynthesis. Functionally, translocates 4-amino-4-deoxy-L-arabinose-phosphoundecaprenol (alpha-L-Ara4N-phosphoundecaprenol) from the cytoplasmic to the periplasmic side of the inner membrane. This chain is Probable 4-amino-4-deoxy-L-arabinose-phosphoundecaprenol flippase subunit ArnF, found in Aeromonas salmonicida (strain A449).